Reading from the N-terminus, the 395-residue chain is Ribosomal RNA large subunit methyltransferase G (395 aa).

The protein belongs to the methyltransferase superfamily. RlmG family.

It is found in the cytoplasm. It catalyses the reaction guanosine(1835) in 23S rRNA + S-adenosyl-L-methionine = N(2)-methylguanosine(1835) in 23S rRNA + S-adenosyl-L-homocysteine + H(+). Functionally, specifically methylates the guanine in position 1835 (m2G1835) of 23S rRNA. The chain is Ribosomal RNA large subunit methyltransferase G from Yersinia pestis (strain Pestoides F).